The following is a 427-amino-acid chain: Glutamate-1-semialdehyde 2,1-aminomutase (427 aa).

Lysine 265 is subject to N6-(pyridoxal phosphate)lysine.

It belongs to the class-III pyridoxal-phosphate-dependent aminotransferase family. HemL subfamily. As to quaternary structure, homodimer. It depends on pyridoxal 5'-phosphate as a cofactor.

Its subcellular location is the cytoplasm. It carries out the reaction (S)-4-amino-5-oxopentanoate = 5-aminolevulinate. The protein operates within porphyrin-containing compound metabolism; protoporphyrin-IX biosynthesis; 5-aminolevulinate from L-glutamyl-tRNA(Glu): step 2/2. The protein is Glutamate-1-semialdehyde 2,1-aminomutase of Bordetella parapertussis (strain 12822 / ATCC BAA-587 / NCTC 13253).